The sequence spans 95 residues: Co-chaperonin GroES (95 aa).

Belongs to the GroES chaperonin family. In terms of assembly, heptamer of 7 subunits arranged in a ring. Interacts with the chaperonin GroEL.

The protein localises to the cytoplasm. Its function is as follows. Together with the chaperonin GroEL, plays an essential role in assisting protein folding. The GroEL-GroES system forms a nano-cage that allows encapsulation of the non-native substrate proteins and provides a physical environment optimized to promote and accelerate protein folding. GroES binds to the apical surface of the GroEL ring, thereby capping the opening of the GroEL channel. The sequence is that of Co-chaperonin GroES from Rhizorhabdus wittichii (strain DSM 6014 / CCUG 31198 / JCM 15750 / NBRC 105917 / EY 4224 / RW1) (Sphingomonas wittichii).